The following is a 369-amino-acid chain: Peridinin-chlorophyll a-binding protein 2, chloroplastic (369 aa).

The N-terminal 56 residues, 1–56, are a transit peptide targeting the chloroplast; that stretch reads MVRSGKKAVVLATVAFCATSVVQKTCGFVPSPLRQRAAAAGAAASVATMFAPAAFA. Tandem repeats lie at residues 57-219 and 220-369.

Homotrimer.

It localises to the plastid. Its subcellular location is the chloroplast. In terms of biological role, water-soluble antenna for capture of solar energy in the blue-green range. Peridinin is an asymmetric carotenoid. This chain is Peridinin-chlorophyll a-binding protein 2, chloroplastic, found in Amphidinium carterae (Dinoflagellate).